Reading from the N-terminus, the 203-residue chain is Small ribosomal subunit protein uS4 (203 aa).

The 64-residue stretch at 93 to 156 (RRLDNVVYRL…MKVPAILEAV (64 aa)) folds into the S4 RNA-binding domain.

This sequence belongs to the universal ribosomal protein uS4 family. As to quaternary structure, part of the 30S ribosomal subunit. Contacts protein S5. The interaction surface between S4 and S5 is involved in control of translational fidelity.

Functionally, one of the primary rRNA binding proteins, it binds directly to 16S rRNA where it nucleates assembly of the body of the 30S subunit. In terms of biological role, with S5 and S12 plays an important role in translational accuracy. This is Small ribosomal subunit protein uS4 from Streptococcus pyogenes serotype M1.